Consider the following 212-residue polypeptide: Deoxyribose-phosphate aldolase (212 aa).

Residue Asp-89 is the Proton donor/acceptor of the active site. The active-site Schiff-base intermediate with acetaldehyde is the Lys-151. The active-site Proton donor/acceptor is Lys-180.

The protein belongs to the DeoC/FbaB aldolase family. DeoC type 1 subfamily.

It localises to the cytoplasm. The catalysed reaction is 2-deoxy-D-ribose 5-phosphate = D-glyceraldehyde 3-phosphate + acetaldehyde. It participates in carbohydrate degradation; 2-deoxy-D-ribose 1-phosphate degradation; D-glyceraldehyde 3-phosphate and acetaldehyde from 2-deoxy-alpha-D-ribose 1-phosphate: step 2/2. Functionally, catalyzes a reversible aldol reaction between acetaldehyde and D-glyceraldehyde 3-phosphate to generate 2-deoxy-D-ribose 5-phosphate. This is Deoxyribose-phosphate aldolase from Clostridium botulinum (strain Langeland / NCTC 10281 / Type F).